The sequence spans 318 residues: MPVRIPDHLPAAGVLESENIFVMSETRAANQDIRPMKVLILNLMPNKIETETQLLRLLGNTPLQVDVDLLRIHDKESKHTSIDHMNTFYRDFEDVRHKNYDGLIITGAPLGQIDFEDVVYWDHIREIIDWSQEHVTSVLFLCWAAHAGLYHLYGLNRKILQQKRSGVFVHRRTCQHFPLLRGFDDEFFAPHSRFAEMDVEDIRQHPQLQVLAQSDEAGAYLVLSRNNRNLFVMGHPEYQKSTLNDEYHRDLAQGLNPNVPQNYYRNNDPEAEAIARWHSHGSLLVSNWLNYYVYQLTPYDLSDMTAMTPWESRQETLP.

Cysteine 142 serves as the catalytic Acyl-thioester intermediate. Substrate is bound by residues lysine 163 and serine 192. Histidine 235 acts as the Proton acceptor in catalysis. The active site involves glutamate 237. Arginine 249 contacts substrate.

This sequence belongs to the MetA family.

It is found in the cytoplasm. It catalyses the reaction L-homoserine + succinyl-CoA = O-succinyl-L-homoserine + CoA. The protein operates within amino-acid biosynthesis; L-methionine biosynthesis via de novo pathway; O-succinyl-L-homoserine from L-homoserine: step 1/1. Transfers a succinyl group from succinyl-CoA to L-homoserine, forming succinyl-L-homoserine. The sequence is that of Homoserine O-succinyltransferase from Shewanella putrefaciens (strain CN-32 / ATCC BAA-453).